Reading from the N-terminus, the 271-residue chain is MNNNSSSLSIGNKLFKSRLLIGTGKYQTLNQMQESIINSECEIVTVAVRRVQSSESSHKGLMEAIDWKKLWMLPNTAGCTNSEEAIRIAKMGRELAKLSGQEDNNFVKLEVIPDNRYLLPDPFGTLEAAEALIKEGFVVMPYINADPLLAKRLENIGCSCVMPLGSAIGSAQGIRNESNIRIIIENSNVPVIVDAGIGVPSHAAEAMEMGADAVLINSAIALAKDPKSMAEGMCKGVHAGRKAFLAGRLVEQPLANPSSPCTEISKSSYVQ.

The Schiff-base intermediate with DXP role is filled by lysine 108. 1-deoxy-D-xylulose 5-phosphate-binding positions include glycine 169, alanine 195–glycine 196, and asparagine 217–serine 218.

It belongs to the ThiG family. In terms of assembly, homotetramer. Forms heterodimers with either ThiH or ThiS.

The protein localises to the cytoplasm. It carries out the reaction [ThiS sulfur-carrier protein]-C-terminal-Gly-aminoethanethioate + 2-iminoacetate + 1-deoxy-D-xylulose 5-phosphate = [ThiS sulfur-carrier protein]-C-terminal Gly-Gly + 2-[(2R,5Z)-2-carboxy-4-methylthiazol-5(2H)-ylidene]ethyl phosphate + 2 H2O + H(+). It functions in the pathway cofactor biosynthesis; thiamine diphosphate biosynthesis. Its function is as follows. Catalyzes the rearrangement of 1-deoxy-D-xylulose 5-phosphate (DXP) to produce the thiazole phosphate moiety of thiamine. Sulfur is provided by the thiocarboxylate moiety of the carrier protein ThiS. In vitro, sulfur can be provided by H(2)S. This chain is Thiazole synthase, found in Prochlorococcus marinus (strain SARG / CCMP1375 / SS120).